A 258-amino-acid chain; its full sequence is Rho-related GTP-binding protein RhoU (258 aa).

The disordered stretch occupies residues 1 to 45 (MPPQQGDPAFPDRCEAPPVPPRRERGGRGGRGPGEPGGRGRAGGA). A compositionally biased stretch (basic and acidic residues) spans 10–27 (FPDRCEAPPVPPRRERGG). The span at 29 to 45 (GGRGPGEPGGRGRAGGA) shows a compositional bias: gly residues. Residues 56–63 (GDGAVGKT), 103–107 (DTAGQ), and 161–164 (TQSD) each bind GTP. Residues K177 and K248 each participate in a glycyl lysine isopeptide (Lys-Gly) (interchain with G-Cter in ubiquitin) cross-link. The S-palmitoyl cysteine moiety is linked to residue C256.

Belongs to the small GTPase superfamily. Rho family. In terms of assembly, interacts with PAK1. Interacts with PAK3. Interacts with ARHGAP30 in a GTP-independent manner. In its GTP-loaded conformation, interacts with ARHGAP31. Interacts with PTK2B/PYK2. Interacts with PAK4; the interaction is PAK4 kinase activity-independent and protects RHOU from ubiquitination. The cofactor is Mg(2+). In terms of processing, ubiquitinated. 'Lys-48'-linked ubiquitination at Lys-177 and Lys-248 by the ECS(RAB40A) complex leading to its degradation. Tyrosine phosphorylated by SRC in response to PTK2B/PYK2 activation. Ubiquitously expressed in all tissues examined. Expressed at high levels in the stomach, small intestine, brain, skeletal muscle and placenta.

The protein resides in the cell membrane. It localises to the golgi apparatus membrane. The protein localises to the cell junction. Its subcellular location is the focal adhesion. It is found in the cell projection. The protein resides in the podosome. Functionally, binds to and activates protein kinase PAK1. Plays a role in the regulation of cell morphology, cytoskeletal organization and focal adhesion assembly during cell migration. Also stimulates quiescent cells to reenter the cell cycle. Has no detectable GTPase activity but its high intrinsic guanine nucleotide exchange activity suggests it is constitutively GTP-bound. The chain is Rho-related GTP-binding protein RhoU from Homo sapiens (Human).